The following is a 276-amino-acid chain: DNA repair protein RecO (276 aa).

Belongs to the RecO family.

Involved in DNA repair and RecF pathway recombination. This Mycobacterium sp. (strain JLS) protein is DNA repair protein RecO.